The primary structure comprises 575 residues: Isocitrate dehydrogenase kinase/phosphatase (575 aa).

Residues 316 to 322 (ARGDKGL) and Lys337 contribute to the ATP site. The active site involves Asp372.

This sequence belongs to the AceK family.

It is found in the cytoplasm. It carries out the reaction L-seryl-[isocitrate dehydrogenase] + ATP = O-phospho-L-seryl-[isocitrate dehydrogenase] + ADP + H(+). Its function is as follows. Bifunctional enzyme which can phosphorylate or dephosphorylate isocitrate dehydrogenase (IDH) on a specific serine residue. This is a regulatory mechanism which enables bacteria to bypass the Krebs cycle via the glyoxylate shunt in response to the source of carbon. When bacteria are grown on glucose, IDH is fully active and unphosphorylated, but when grown on acetate or ethanol, the activity of IDH declines drastically concomitant with its phosphorylation. The chain is Isocitrate dehydrogenase kinase/phosphatase from Anaeromyxobacter sp. (strain Fw109-5).